Here is a 679-residue protein sequence, read N- to C-terminus: Glycine--tRNA ligase beta subunit (679 aa).

It belongs to the class-II aminoacyl-tRNA synthetase family. As to quaternary structure, tetramer of two alpha and two beta subunits.

The protein localises to the cytoplasm. It carries out the reaction tRNA(Gly) + glycine + ATP = glycyl-tRNA(Gly) + AMP + diphosphate. This chain is Glycine--tRNA ligase beta subunit, found in Streptococcus equi subsp. zooepidemicus (strain H70).